The sequence spans 266 residues: Apolipoprotein A-I (266 aa).

Residues methionine 1 to alanine 18 form the signal peptide. A run of 2 repeats spans residues leucine 67–glycine 88 and proline 89–serine 110. Positions leucine 67–glutamine 266 are 10 X approximate tandem repeats. Methionine 109 carries the methionine sulfoxide modification. One copy of the 3; half-length repeat lies at lysine 111 to glutamine 121. Tandem repeats lie at residues proline 122 to alanine 143, proline 144 to serine 165, proline 166 to alanine 187, proline 188 to glycine 209, and alanine 210 to lysine 231. One copy of the 9; half-length repeat lies at proline 232 to leucine 242. The stretch at proline 243–glutamine 266 is repeat 10.

The protein belongs to the apolipoprotein A1/A4/E family. In terms of assembly, homodimer. Interacts with APOA1BP and CLU. Component of a sperm activating protein complex (SPAP), consisting of APOA1, an immunoglobulin heavy chain, an immunoglobulin light chain and albumin. Interacts with NDRG1. Interacts with SCGB3A2. Interacts with NAXE and YJEFN3. In terms of processing, glycosylated. Post-translationally, palmitoylated. Phosphorylation sites are present in the extracellular medium.

It localises to the secreted. Participates in the reverse transport of cholesterol from tissues to the liver for excretion by promoting cholesterol efflux from tissues and by acting as a cofactor for the lecithin cholesterol acyltransferase (LCAT). As part of the SPAP complex, activates spermatozoa motility. The sequence is that of Apolipoprotein A-I (APOA1) from Mirounga angustirostris (Northern elephant seal).